A 150-amino-acid polypeptide reads, in one-letter code: Large ribosomal subunit protein bL9 (150 aa).

The protein belongs to the bacterial ribosomal protein bL9 family.

Binds to the 23S rRNA. In Burkholderia cenocepacia (strain HI2424), this protein is Large ribosomal subunit protein bL9.